The primary structure comprises 251 residues: MQTLEEHCWSCSCTRGRDKKGTRLSTWLAQRAAKAMSSLNSLLSLAYHTLASSEGRSLIRRSLVLFAVGVFLALVLNLLQIQRNVTLFPEEVIATIFSSAWWVPPCCGTAAAVVGLLYPCIDSHLGEPHKFKREWASVMRCIAVFVGINHASAKLDFANNVQLSLTLAALSLGLWWTFDRSRSGLGLGITIAFLATLITQFLVYNGVYQYTSPDFLYIRSWLPCIFFSGGVTVGNIGRQLAMGSSEKTHSD.

Residues 1 to 58 (MQTLEEHCWSCSCTRGRDKKGTRLSTWLAQRAAKAMSSLNSLLSLAYHTLASSEGRSL) lie on the Cytoplasmic side of the membrane. Residues 59–81 (IRRSLVLFAVGVFLALVLNLLQI) form a helical membrane-spanning segment. Topologically, residues 82–100 (QRNVTLFPEEVIATIFSSA) are extracellular. Residues 101–118 (WWVPPCCGTAAAVVGLLY) form a helical membrane-spanning segment. Over 119–133 (PCIDSHLGEPHKFKR) the chain is Cytoplasmic. Residues 134 to 156 (EWASVMRCIAVFVGINHASAKLD) form a helical membrane-spanning segment. Residues 157-159 (FAN) lie on the Extracellular side of the membrane. Residues 160 to 178 (NVQLSLTLAALSLGLWWTF) form a helical membrane-spanning segment. Residues 179–183 (DRSRS) are Cytoplasmic-facing. A helical membrane pass occupies residues 184–205 (GLGLGITIAFLATLITQFLVYN). Topologically, residues 206–219 (GVYQYTSPDFLYIR) are extracellular. Residues 220 to 237 (SWLPCIFFSGGVTVGNIG) traverse the membrane as a helical segment. The Cytoplasmic segment spans residues 238 to 251 (RQLAMGSSEKTHSD). A KxHxx motif is present at residues 245 to 251 (SEKTHSD).

This sequence belongs to the INSIG family. Interacts with scap; interaction is direct and only takes place in the presence of sterols; it prevents interaction between scap and the coat protein complex II (COPII). Associates with the SCAP-SREBP complex; association is mediated via its interaction with scap and only takes place in the presence of sterols.

It localises to the endoplasmic reticulum membrane. Functionally, oxysterol-binding protein that mediates feedback control of cholesterol synthesis by controlling both endoplasmic reticulum to Golgi transport of scap and degradation of hmgcr. Acts as a negative regulator of cholesterol biosynthesis by mediating the retention of the SCAP-SREBP complex in the endoplasmic reticulum, thereby blocking the processing of sterol regulatory element-binding proteins (SREBPs). Binds oxysterol, including 25-hydroxycholesterol, regulating interaction with scap and retention of the SCAP-SREBP complex in the endoplasmic reticulum. In presence of oxysterol, interacts with scap, retaining the SCAP-SREBP complex in the endoplasmic reticulum, thereby preventing scap from escorting SREBPs to the Golgi. Sterol deprivation reduces oxysterol-binding, disrupting the interaction between insig1 and scap, thereby promoting Golgi transport of the SCAP-SREBP complex, followed by processing and nuclear translocation of SREBPs. Also regulates cholesterol synthesis by regulating degradation of hmgcr. This chain is Insulin-induced gene 1 protein, found in Xenopus tropicalis (Western clawed frog).